Consider the following 326-residue polypeptide: Transmembrane protein 255B (326 aa).

Transmembrane regions (helical) follow at residues 26-46, 55-75, 85-105, and 200-220; these read LWFV…GLAA, VGGY…IIGI, LVAA…CAIV, and AVLN…LGAF. The disordered stretch occupies residues 284–326; sequence LASSEDLQPPSPSSSGSGLPGQAPPCYAPTYFPPGEKPPPYAP. Pro residues predominate over residues 305 to 326; sequence QAPPCYAPTYFPPGEKPPPYAP.

This sequence belongs to the TMEM255 family.

Its subcellular location is the membrane. This chain is Transmembrane protein 255B (TMEM255B), found in Homo sapiens (Human).